Consider the following 219-residue polypeptide: MLRAGAPTAGSFRTEEVHTGTTIMAVEFDGGVVVGSDSRVSAGTAVVNRVFDKLSPLHQRIFCALSGSAADAQAIADMAAYQLELHGLELEEPPLVLAAANVVKNISYKYREDLLAHLIVAGWDQREGGQVYGTMGGMLIRQPFTIGGSGSSYIYGYVDAAYKPGMTPEECRRFTTNAITLAMNRDGSSGGVIYLVTITAAGVDHRVILGDELPRFYDE.

Positions Met1–Gly20 are cleaved as a propeptide — removed in mature form. Thr21 functions as the Nucleophile in the catalytic mechanism. N6-acetyllysine is present on residues Lys53 and Lys109.

Belongs to the peptidase T1B family. In terms of assembly, the 26S proteasome consists of a 20S proteasome core and two 19S regulatory subunits. The 20S proteasome core is composed of 28 subunits that are arranged in four stacked rings, resulting in a barrel-shaped structure. The two end rings are each formed by seven alpha subunits, and the two central rings are each formed by seven beta subunits. The catalytic chamber with the active sites is on the inside of the barrel. Component of the immunoproteasome, where it displaces the equivalent housekeeping subunit PSMB6. Component of the spermatoproteasome, a form of the proteasome specifically found in testis. Post-translationally, autocleaved. The resulting N-terminal Thr residue of the mature subunit is responsible for the nucleophile proteolytic activity.

It is found in the cytoplasm. It localises to the nucleus. It carries out the reaction Cleavage of peptide bonds with very broad specificity.. Its function is as follows. The proteasome is a multicatalytic proteinase complex which is characterized by its ability to cleave peptides with Arg, Phe, Tyr, Leu, and Glu adjacent to the leaving group at neutral or slightly basic pH. The proteasome has an ATP-dependent proteolytic activity. This subunit is involved in antigen processing to generate class I binding peptides. This chain is Proteasome subunit beta type-9 (Psmb9), found in Mus spicilegus (Steppe mouse).